The following is a 363-amino-acid chain: Cyanide hydratase (363 aa).

In terms of domain architecture, CN hydrolase spans 6 to 285 (YKAACVTSEP…DGLLFVDIDL (280 aa)). E46 functions as the Proton acceptor in the catalytic mechanism. K128 is a catalytic residue. C163 acts as the Nucleophile in catalysis.

Belongs to the carbon-nitrogen hydrolase superfamily. Nitrilase family. Oligomer of dimers, forming left-handed helical fibers.

It catalyses the reaction formamide = hydrogen cyanide + H2O. In terms of biological role, catalyzes the hydration of cyanide to formamide. Degradation of cyanide may be important for plant pathogenic fungi in infection of cyanogenic plants. The chain is Cyanide hydratase (CyhAB) from Alternaria brassicicola (Dark leaf spot agent).